The primary structure comprises 253 residues: Triosephosphate isomerase (253 aa).

9-11 (NWK) serves as a coordination point for substrate. H97 acts as the Electrophile in catalysis. Catalysis depends on E169, which acts as the Proton acceptor. Substrate is bound by residues G175, S215, and 236–237 (GG).

It belongs to the triosephosphate isomerase family. Homodimer.

It is found in the cytoplasm. It catalyses the reaction D-glyceraldehyde 3-phosphate = dihydroxyacetone phosphate. It functions in the pathway carbohydrate biosynthesis; gluconeogenesis. The protein operates within carbohydrate degradation; glycolysis; D-glyceraldehyde 3-phosphate from glycerone phosphate: step 1/1. Functionally, involved in the gluconeogenesis. Catalyzes stereospecifically the conversion of dihydroxyacetone phosphate (DHAP) to D-glyceraldehyde-3-phosphate (G3P). This Staphylococcus saprophyticus subsp. saprophyticus (strain ATCC 15305 / DSM 20229 / NCIMB 8711 / NCTC 7292 / S-41) protein is Triosephosphate isomerase.